The sequence spans 1059 residues: Endo-1,4-beta-xylanase A (1059 aa).

A signal peptide spans 1–30 (MQVRKRRGLLDVSTAVLVGILAGFLGVVLA). Positions 47-199 (SSLETVLALS…LDKVQVLAPK (153 aa)) are A-1. The A-2 stretch occupies residues 200–354 (ESGPKVIYET…DDVKIVDTTS (155 aa)). One can recognise a GH10 domain in the interval 364–692 (EKEIPALKEV…KLAYWAIVAP (329 aa)). Catalysis depends on Glu502, which acts as the Proton donor. The Nucleophile role is filled by Glu608. 2 CBM-cenC domains span residues 700-870 (KESR…LEGI) and 871-1059 (MVAT…RLIK).

It belongs to the glycosyl hydrolase 10 (cellulase F) family.

It carries out the reaction Endohydrolysis of (1-&gt;4)-beta-D-xylosidic linkages in xylans.. This is Endo-1,4-beta-xylanase A (xynA) from Thermotoga maritima (strain ATCC 43589 / DSM 3109 / JCM 10099 / NBRC 100826 / MSB8).